Reading from the N-terminus, the 659-residue chain is Nitrate import ATP-binding protein NrtC (659 aa).

The region spanning leucine 5–glutamate 239 is the ABC transporter domain. Glycine 42–serine 49 contacts ATP. The linker stretch occupies residues glutamine 255 to glutamine 278. The tract at residues lysine 279–alanine 659 is nrtA-like.

This sequence belongs to the ABC transporter superfamily. Nitrate/nitrite/cyanate uptake transporter (NitT) (TC 3.A.1.16) family. As to quaternary structure, the complex is composed of two ATP-binding proteins (NrtC and NrtD), two transmembrane proteins (NrtB) and a solute-binding protein (NrtA).

The protein localises to the cell inner membrane. The enzyme catalyses nitrate(out) + ATP + H2O = nitrate(in) + ADP + phosphate + H(+). Transport is inhibited by ammonium. The C-terminal domain of NrtC is involved in the ammonium-promoted inhibition of the nitrate/nitrite transporter. Functionally, part of the ABC transporter complex NrtABCD involved in nitrate uptake. The complex is probably also involved in nitrite transport. Probably responsible for energy coupling to the transport system. The chain is Nitrate import ATP-binding protein NrtC from Synechococcus elongatus (strain ATCC 33912 / PCC 7942 / FACHB-805) (Anacystis nidulans R2).